Consider the following 212-residue polypeptide: Large ribosomal subunit protein uL3 (212 aa).

Gln-153 carries the N5-methylglutamine modification.

The protein belongs to the universal ribosomal protein uL3 family. In terms of assembly, part of the 50S ribosomal subunit. Forms a cluster with proteins L14 and L19. Methylated by PrmB.

Functionally, one of the primary rRNA binding proteins, it binds directly near the 3'-end of the 23S rRNA, where it nucleates assembly of the 50S subunit. The protein is Large ribosomal subunit protein uL3 of Marinobacter nauticus (strain ATCC 700491 / DSM 11845 / VT8) (Marinobacter aquaeolei).